A 155-amino-acid chain; its full sequence is Aspartate carbamoyltransferase regulatory chain (155 aa).

Zn(2+) contacts are provided by Cys113, Cys118, Cys139, and Cys142.

Belongs to the PyrI family. As to quaternary structure, contains catalytic and regulatory chains. Zn(2+) is required as a cofactor.

Involved in allosteric regulation of aspartate carbamoyltransferase. This is Aspartate carbamoyltransferase regulatory chain from Methanoculleus marisnigri (strain ATCC 35101 / DSM 1498 / JR1).